The chain runs to 515 residues: Alpha-1B adrenergic receptor (515 aa).

Topologically, residues 1-45 are extracellular; it reads MNPDLDTGHNTSAPAQWGELKDANFTGPNQTSSNSTLPQLDVTRA. Residues Asn-10, Asn-24, and Asn-34 are each glycosylated (N-linked (GlcNAc...) asparagine). The helical transmembrane segment at 46 to 70 threads the bilayer; the sequence is ISVGLVLGAFILFAIVGNILVILSV. Residues 71-83 lie on the Cytoplasmic side of the membrane; sequence ACNRHLRTPTNYF. Residues 84–105 form a helical membrane-spanning segment; it reads IVNLAIADLLLSFTVLPFSATL. Residues 106 to 115 are Extracellular-facing; it reads EVLGYWVLGR. The chain crosses the membrane as a helical span at residues 116–141; the sequence is IFCDIWAAVDVLCCTASILSLCAISI. An intrachain disulfide couples Cys-118 to Cys-195. The Cytoplasmic portion of the chain corresponds to 142-161; that stretch reads DRYIGVRYSLQYPTLVTRRK. The helical transmembrane segment at 162 to 184 threads the bilayer; sequence AILALLSVWVLSTVISIGPLLGW. At 185 to 201 the chain is on the extracellular side; the sequence is KEPAPNDDKECGVTEEP. A helical membrane pass occupies residues 202–224; it reads FYALFSSLGSFYIPLAVILVMYC. Topologically, residues 225 to 295 are cytoplasmic; that stretch reads RVYIVAKRTT…FSREKKAAKT (71 aa). The residue at position 264 (Thr-264) is a Phosphothreonine. Residues 296-319 traverse the membrane as a helical segment; the sequence is LGIVVGMFILCWLPFFIALPLGSL. The Extracellular segment spans residues 320-326; sequence FSTLKPP. Residues 327–351 form a helical membrane-spanning segment; the sequence is DAVFKVVFWLGYFNSCLNPIIYPCS. Over 352–515 the chain is Cytoplasmic; it reads SKEFKRAFMR…SNMPLAPGHF (164 aa). Residue Cys-365 is the site of S-palmitoyl cysteine attachment. Positions 368-378 match the Nuclear localization signal motif; it reads RSGRRRRRRRR. 2 disordered regions span residues 392-428 and 473-515; these read GGSL…SPGY and LLGE…PGHF. Positions 410-424 are enriched in polar residues; sequence SCMSGSQRTLPSASP.

The protein belongs to the G-protein coupled receptor 1 family. Adrenergic receptor subfamily. ADRA1B sub-subfamily. Homo- and heterooligomer. Heterooligomerizes with ADRA1B homooligomers in cardiac myocytes. Interacts with CAVIN4.

The protein localises to the nucleus membrane. The protein resides in the cell membrane. It is found in the cytoplasm. Its subcellular location is the membrane. It localises to the caveola. Functionally, this alpha-adrenergic receptor mediates its action by association with G proteins that activate a phosphatidylinositol-calcium second messenger system. Its effect is mediated by G(q) and G(11) proteins. Nuclear ADRA1A-ADRA1B heterooligomers regulate phenylephrine (PE)-stimulated ERK signaling in cardiac myocytes. This Mesocricetus auratus (Golden hamster) protein is Alpha-1B adrenergic receptor (ADRA1B).